The chain runs to 921 residues: Isoleucine--tRNA ligase (921 aa).

Positions 57–67 (PYANGDIHMGH) match the 'HIGH' region motif. Residue E552 coordinates L-isoleucyl-5'-AMP. The 'KMSKS' region signature appears at 593–597 (KMSKS). K596 provides a ligand contact to ATP. The Zn(2+) site is built by C888, C891, C908, and C911.

The protein belongs to the class-I aminoacyl-tRNA synthetase family. IleS type 1 subfamily. Monomer. The cofactor is Zn(2+).

The protein resides in the cytoplasm. The enzyme catalyses tRNA(Ile) + L-isoleucine + ATP = L-isoleucyl-tRNA(Ile) + AMP + diphosphate. Catalyzes the attachment of isoleucine to tRNA(Ile). As IleRS can inadvertently accommodate and process structurally similar amino acids such as valine, to avoid such errors it has two additional distinct tRNA(Ile)-dependent editing activities. One activity is designated as 'pretransfer' editing and involves the hydrolysis of activated Val-AMP. The other activity is designated 'posttransfer' editing and involves deacylation of mischarged Val-tRNA(Ile). The polypeptide is Isoleucine--tRNA ligase (Bacillus cereus (strain 03BB102)).